We begin with the raw amino-acid sequence, 394 residues long: Actin-related protein 2-B (394 aa).

ATP-binding positions include 160 to 162 (GDG), 214 to 218 (RMMKE), and 305 to 310 (GGSTMY).

It belongs to the actin family. ARP2 subfamily. As to quaternary structure, component of the Arp2/3 complex composed of actr2/arp2, actr3/arp3, arpc1b, arpc2, arpc3, arpc4 and arpc5.

The protein localises to the cytoplasm. It localises to the cytoskeleton. Its subcellular location is the cell projection. The protein resides in the nucleus. Its function is as follows. ATP-binding component of the Arp2/3 complex, a multiprotein complex that mediates actin polymerization upon stimulation by nucleation-promoting factor (NPF). The Arp2/3 complex mediates the formation of branched actin networks in the cytoplasm, providing the force for cell motility. Seems to contact the pointed end of the daughter actin filament. In addition to its role in the cytoplasmic cytoskeleton, the Arp2/3 complex also promotes actin polymerization in the nucleus, thereby regulating gene transcription and repair of damaged DNA. The Arp2/3 complex promotes homologous recombination (HR) repair in response to DNA damage by promoting nuclear actin polymerization, leading to drive motility of double-strand breaks (DSBs). This Danio rerio (Zebrafish) protein is Actin-related protein 2-B (actr2b).